A 208-amino-acid polypeptide reads, in one-letter code: Small ribosomal subunit protein uS3 (208 aa).

The KH type-2 domain occupies 16-85; sequence IDEYFKKELS…KPQIDVKPVE (70 aa).

The protein belongs to the universal ribosomal protein uS3 family. As to quaternary structure, part of the 30S ribosomal subunit.

Binds the lower part of the 30S subunit head. The protein is Small ribosomal subunit protein uS3 of Methanocaldococcus jannaschii (strain ATCC 43067 / DSM 2661 / JAL-1 / JCM 10045 / NBRC 100440) (Methanococcus jannaschii).